Reading from the N-terminus, the 338-residue chain is Flap endonuclease 1 (338 aa).

The N-domain stretch occupies residues 1–98 (MGTDIGDLLL…DTLAKRHEVR (98 aa)). 7 residues coordinate Mg(2+): D27, D80, E152, E154, D173, D175, and D236. Positions 116–257 (EAYKYAQASS…RALKLVKEHG (142 aa)) are I-domain. Residues 330–338 (SQSTLDQWF) are interaction with PCNA.

The protein belongs to the XPG/RAD2 endonuclease family. FEN1 subfamily. Interacts with PCNA. PCNA stimulates the nuclease activity without altering cleavage specificity. Requires Mg(2+) as cofactor.

Structure-specific nuclease with 5'-flap endonuclease and 5'-3' exonuclease activities involved in DNA replication and repair. During DNA replication, cleaves the 5'-overhanging flap structure that is generated by displacement synthesis when DNA polymerase encounters the 5'-end of a downstream Okazaki fragment. Binds the unpaired 3'-DNA end and kinks the DNA to facilitate 5' cleavage specificity. Cleaves one nucleotide into the double-stranded DNA from the junction in flap DNA, leaving a nick for ligation. Also involved in the base excision repair (BER) pathway. Acts as a genome stabilization factor that prevents flaps from equilibrating into structures that lead to duplications and deletions. Also possesses 5'-3' exonuclease activity on nicked or gapped double-stranded DNA. In Methanococcoides burtonii (strain DSM 6242 / NBRC 107633 / OCM 468 / ACE-M), this protein is Flap endonuclease 1.